Here is a 399-residue protein sequence, read N- to C-terminus: Glutathione S-transferase LANCL1 (399 aa).

A2 carries the N-acetylalanine modification. K142 carries the N6-acetyllysine modification. Zn(2+) is bound at residue C276. Residue K317 coordinates glutathione. Zn(2+) contacts are provided by C322 and H323. 364–367 provides a ligand contact to glutathione; that stretch reads RTPD.

The protein belongs to the LanC-like protein family. Interacts with the C-terminal of STOM. Interacts with the EPS8 SH3 domain. Interaction with EPS8 is inhibited by glutathione binding. Strongly expressed in the brain, testis and skeletal muscle. Expressed in the neurons of the cerebellum, the germinal cells of the seminiferous tubules in testis, in liver hepoatocytes and in cardiac myocytes.

The protein resides in the cytoplasm. It localises to the cell membrane. It carries out the reaction RX + glutathione = an S-substituted glutathione + a halide anion + H(+). The enzyme catalyses 1-chloro-2,4-dinitrobenzene + glutathione = 2,4-dinitrophenyl-S-glutathione + chloride + H(+). Functionally, functions as a glutathione transferase. Catalyzes conjugation of the glutathione (GSH) to artificial substrates 1-chloro-2,4-dinitrobenzene (CDNB) and p-nitrophenyl acetate. Mitigates neuronal oxidative stress during normal postnatal development and in response to oxidative stresses probably through GSH antioxidant defense mechanism. May play a role in EPS8 signaling. Binds glutathione. The chain is Glutathione S-transferase LANCL1 from Rattus norvegicus (Rat).